The sequence spans 484 residues: Aldehyde dehydrogenase family 3 member H1 (484 aa).

196-201 contributes to the NAD(+) binding site; that stretch reads GSSKIG. Glu-218 (proton acceptor) is an active-site residue. Residue Cys-253 is the Nucleophile of the active site.

Belongs to the aldehyde dehydrogenase family. As to quaternary structure, homodimer and homomultimer. Isoform alpha is expressed in expanded leaves and flowers. Detected in seedlings. Isoform beta is mainly expressed in flowers. Detected in leaves and seedlings.

The catalysed reaction is an aldehyde + NAD(+) + H2O = a carboxylate + NADH + 2 H(+). Thiol-based regulation. Inactivation after dimerization under oxidizing conditions. Involved in oxidative stress tolerance by detoxifying reactive aldehydes derived from lipid peroxidation. Medium- to long-chain saturated aldehydes are preferred substrates, while the short-chain aldehyde propanal is a weak substrate. Is strictely NAD(+) specific. The chain is Aldehyde dehydrogenase family 3 member H1 (ALDH3H1) from Arabidopsis thaliana (Mouse-ear cress).